The sequence spans 152 residues: Endoribonuclease YbeY (152 aa).

Zn(2+) is bound by residues His118, His122, and His128.

Belongs to the endoribonuclease YbeY family. The cofactor is Zn(2+).

Its subcellular location is the cytoplasm. Its function is as follows. Single strand-specific metallo-endoribonuclease involved in late-stage 70S ribosome quality control and in maturation of the 3' terminus of the 16S rRNA. This is Endoribonuclease YbeY from Lacticaseibacillus casei (strain BL23) (Lactobacillus casei).